A 93-amino-acid polypeptide reads, in one-letter code: Acylphosphatase (93 aa).

The Acylphosphatase-like domain occupies 7-93 (RAHVFVSGTV…EGIDGFHIRR (87 aa)). Active-site residues include arginine 22 and asparagine 40.

Belongs to the acylphosphatase family.

It carries out the reaction an acyl phosphate + H2O = a carboxylate + phosphate + H(+). The sequence is that of Acylphosphatase (acyP) from Haloquadratum walsbyi (strain DSM 16790 / HBSQ001).